The chain runs to 362 residues: Methylthioribose-1-phosphate isomerase (362 aa).

Catalysis depends on Asp-252, which acts as the Proton donor.

The protein belongs to the eIF-2B alpha/beta/delta subunits family. MtnA subfamily.

It is found in the cytoplasm. The protein resides in the nucleus. It carries out the reaction 5-(methylsulfanyl)-alpha-D-ribose 1-phosphate = 5-(methylsulfanyl)-D-ribulose 1-phosphate. It functions in the pathway amino-acid biosynthesis; L-methionine biosynthesis via salvage pathway; L-methionine from S-methyl-5-thio-alpha-D-ribose 1-phosphate: step 1/6. Functionally, catalyzes the interconversion of methylthioribose-1-phosphate (MTR-1-P) into methylthioribulose-1-phosphate (MTRu-1-P). The chain is Methylthioribose-1-phosphate isomerase from Drosophila mojavensis (Fruit fly).